Here is a 428-residue protein sequence, read N- to C-terminus: Adenylosuccinate synthetase (428 aa).

GTP contacts are provided by residues 12–18 (GDEGKGK) and 40–42 (GHT). Asp13 serves as the catalytic Proton acceptor. Mg(2+) is bound by residues Asp13 and Gly40. Residues 13–16 (DEGK), 38–41 (NAGH), Thr129, Arg143, Gln224, Thr239, and Arg303 each bind IMP. His41 functions as the Proton donor in the catalytic mechanism. 299–305 (VTTGRIR) provides a ligand contact to substrate. GTP contacts are provided by residues Arg305, 331 to 333 (KVD), and 410 to 412 (AYG).

It belongs to the adenylosuccinate synthetase family. Homodimer. Mg(2+) serves as cofactor.

The protein localises to the cytoplasm. It carries out the reaction IMP + L-aspartate + GTP = N(6)-(1,2-dicarboxyethyl)-AMP + GDP + phosphate + 2 H(+). Its pathway is purine metabolism; AMP biosynthesis via de novo pathway; AMP from IMP: step 1/2. Its function is as follows. Plays an important role in the de novo pathway of purine nucleotide biosynthesis. Catalyzes the first committed step in the biosynthesis of AMP from IMP. The chain is Adenylosuccinate synthetase from Francisella tularensis subsp. holarctica (strain FTNF002-00 / FTA).